The chain runs to 164 residues: Cyclic pyranopterin monophosphate synthase (164 aa).

Residues 75–77 and 116–117 contribute to the substrate site; these read MCH and ME. Aspartate 131 is an active-site residue.

It belongs to the MoaC family. As to quaternary structure, homohexamer; trimer of dimers.

It catalyses the reaction (8S)-3',8-cyclo-7,8-dihydroguanosine 5'-triphosphate = cyclic pyranopterin phosphate + diphosphate. It functions in the pathway cofactor biosynthesis; molybdopterin biosynthesis. Catalyzes the conversion of (8S)-3',8-cyclo-7,8-dihydroguanosine 5'-triphosphate to cyclic pyranopterin monophosphate (cPMP). This chain is Cyclic pyranopterin monophosphate synthase, found in Staphylococcus aureus (strain MSSA476).